We begin with the raw amino-acid sequence, 338 residues long: S-adenosylmethionine:tRNA ribosyltransferase-isomerase (338 aa).

The protein belongs to the QueA family. As to quaternary structure, monomer.

It localises to the cytoplasm. The catalysed reaction is 7-aminomethyl-7-carbaguanosine(34) in tRNA + S-adenosyl-L-methionine = epoxyqueuosine(34) in tRNA + adenine + L-methionine + 2 H(+). It participates in tRNA modification; tRNA-queuosine biosynthesis. Functionally, transfers and isomerizes the ribose moiety from AdoMet to the 7-aminomethyl group of 7-deazaguanine (preQ1-tRNA) to give epoxyqueuosine (oQ-tRNA). This is S-adenosylmethionine:tRNA ribosyltransferase-isomerase from Francisella philomiragia subsp. philomiragia (strain ATCC 25017 / CCUG 19701 / FSC 153 / O#319-036).